The primary structure comprises 421 residues: Structure-specific endonuclease subunit SLX1 (421 aa).

Residues 13–95 form the GIY-YIG domain; it reads AFYCCYLLRS…QHTKESRHAE (83 aa). Disordered stretches follow at residues 34–57 and 96–120; these read TPEPSRRLAQHNGDRTGGARKTSS and VERCESEQLGTRGSSRTGKEVKRAG. The SLX1-type zinc-finger motif lies at 225–280; sequence CGVCKQRLNPRNDMIAICSHSLCRCASHLLCLSAHFLEAAGFIGKLIPKEGTCPAC. The segment covering 310–322 has biased composition (basic residues); it reads RRRTEQVGKRKIS. Positions 310–339 are disordered; it reads RRRTEQVGKRKISNHVSSEKGESEASMPST.

Belongs to the SLX1 family. In terms of assembly, forms a heterodimer with SLX4. A divalent metal cation is required as a cofactor.

The protein resides in the nucleus. Its function is as follows. Catalytic subunit of the SLX1-SLX4 structure-specific endonuclease that resolves DNA secondary structures generated during DNA repair and recombination. Has endonuclease activity towards branched DNA substrates, introducing single-strand cuts in duplex DNA close to junctions with ss-DNA. The polypeptide is Structure-specific endonuclease subunit SLX1 (Ajellomyces capsulatus (strain G186AR / H82 / ATCC MYA-2454 / RMSCC 2432) (Darling's disease fungus)).